A 232-amino-acid polypeptide reads, in one-letter code: Ureidoacrylate amidohydrolase RutB (232 aa).

Asp-26 serves as the catalytic Proton acceptor. The active site involves Lys-135. Cys-168 functions as the Nucleophile in the catalytic mechanism.

This sequence belongs to the isochorismatase family. RutB subfamily.

The enzyme catalyses (Z)-3-ureidoacrylate + H2O + H(+) = (Z)-3-aminoacrylate + NH4(+) + CO2. It carries out the reaction (Z)-3-ureidoacrylate + H2O = (Z)-3-aminoacrylate + carbamate + H(+). The catalysed reaction is (Z)-2-methylureidoacrylate + H2O + H(+) = (Z)-2-methylaminoacrylate + NH4(+) + CO2. Hydrolyzes ureidoacrylate to form aminoacrylate and carbamate. The carbamate hydrolyzes spontaneously, thereby releasing one of the nitrogen atoms of the pyrimidine ring as ammonia and one of its carbon atoms as CO2. This chain is Ureidoacrylate amidohydrolase RutB, found in Cronobacter turicensis (strain DSM 18703 / CCUG 55852 / LMG 23827 / z3032).